The following is a 440-amino-acid chain: Protein disulfide-isomerase A6 (440 aa).

An N-terminal signal peptide occupies residues 1–19 (MARLVLGLVSCTFFLAVSG). Thioredoxin domains follow at residues 20-133 (LYSS…ALRQ) and 151-287 (QGRG…EDIA). A disulfide bond links C55 and C58. 3 positions are modified to phosphoserine: S129, S156, and S158. The interval 139 to 161 (LGGRSGGYSSGKQGRGDSSSKKD) is disordered. Residues 152–161 (GRGDSSSKKD) show a composition bias toward basic and acidic residues. Residues C190 and C193 are joined by a disulfide bond. The disordered stretch occupies residues 399 to 440 (GGGSFPTITPREPWDGKDGELPVEDDIDLSDVELDDLEKDEL). The segment covering 419–440 (LPVEDDIDLSDVELDDLEKDEL) has biased composition (acidic residues). Phosphoserine is present on S428. Residues 437 to 440 (KDEL) carry the Prevents secretion from ER motif.

It belongs to the protein disulfide isomerase family. In terms of assembly, part of a large chaperone multiprotein complex comprising DNAJB11, HSP90B1, HSPA5, HYOU, PDIA2, PDIA4, PDIA6, PPIB, SDF2L1, UGGT1 and very small amounts of ERP29, but not, or at very low levels, CALR nor CANX. Interacts with MICA on the surface of tumor cells, leading to MICA disulfide bond reduction which is required for its release from tumor cells. Interacts with ITGB3 following platelet stimulation. Interacts with ERN1; the interaction is direct. Interacts with EIF2AK3.

The protein localises to the endoplasmic reticulum lumen. Its subcellular location is the cell membrane. It localises to the melanosome. It carries out the reaction Catalyzes the rearrangement of -S-S- bonds in proteins.. Its function is as follows. May function as a chaperone that inhibits aggregation of misfolded proteins. Negatively regulates the unfolded protein response (UPR) through binding to UPR sensors such as ERN1, which in turn inactivates ERN1 signaling. May also regulate the UPR via the EIF2AK3 UPR sensor. Plays a role in platelet aggregation and activation by agonists such as convulxin, collagen and thrombin. This is Protein disulfide-isomerase A6 (Pdia6) from Mus musculus (Mouse).